Here is a 545-residue protein sequence, read N- to C-terminus: Membrane protein insertase YidC (545 aa).

The next 6 helical transmembrane spans lie at 10–30, 319–339, 341–361, 407–427, 467–487, and 502–522; these read AVYLSLFFIGIFMLLDDFLFS, LLYFLQVPMQLIMQIFYNVIP, WGLSIMFLTIVVRILIFPLTF, IGGCFPILLQLPVFFALYGLV, ILPFIMMITQLLSTIVSSNVS, and MPIMFFFILYDMPSGLLIYWI.

Belongs to the OXA1/ALB3/YidC family. Type 1 subfamily. As to quaternary structure, interacts with the Sec translocase complex via SecD. Specifically interacts with transmembrane segments of nascent integral membrane proteins during membrane integration.

Its subcellular location is the cell inner membrane. In terms of biological role, required for the insertion and/or proper folding and/or complex formation of integral membrane proteins into the membrane. Involved in integration of membrane proteins that insert both dependently and independently of the Sec translocase complex, as well as at least some lipoproteins. Aids folding of multispanning membrane proteins. The chain is Membrane protein insertase YidC from Borrelia duttonii (strain Ly).